A 311-amino-acid chain; its full sequence is MSISGKLLTEDNQLISPVATVYDYIALLKPRVMSLVVFTALVGLVVSPVVVDPLYGFVAILCIAIGGGGAGALNMWYEADIDALMKRTQKRPIPSGKISRGKALIFSSILSVLSVFLMGVLINWFSALFLAFTIFFYIVIYTIWLKRITPQNIVIGGAAGAFPPMIGWAAATGTISLDSFLLFLIIFMWTPPHFWSLCLFSSSDYEAAGIPMMPNVRGERSTKNQILVYAIITAVCAIGPYITGYAGIIYGISSTILGGMFVYFAYRLWKTDTHDETVPIAKKTFFFSLFYLGAIFGILLIEFLIWHFIIR.

9 consecutive transmembrane segments (helical) span residues 32-52, 53-73, 98-118, 120-140, 153-173, 180-200, 226-246, 248-268, and 285-305; these read VMSLVVFTALVGLVVSPVVVD, PLYGFVAILCIAIGGGGAGAL, ISRGKALIFSSILSVLSVFLM, VLINWFSALFLAFTIFFYIVI, IVIGGAAGAFPPMIGWAAATG, FLLFLIIFMWTPPHFWSLCLF, ILVYAIITAVCAIGPYITGYA, IIYGISSTILGGMFVYFAYRL, and FFFSLFYLGAIFGILLIEFLI.

The protein belongs to the UbiA prenyltransferase family. Protoheme IX farnesyltransferase subfamily.

Its subcellular location is the cell inner membrane. The catalysed reaction is heme b + (2E,6E)-farnesyl diphosphate + H2O = Fe(II)-heme o + diphosphate. The protein operates within porphyrin-containing compound metabolism; heme O biosynthesis; heme O from protoheme: step 1/1. Functionally, converts heme B (protoheme IX) to heme O by substitution of the vinyl group on carbon 2 of heme B porphyrin ring with a hydroxyethyl farnesyl side group. The polypeptide is Protoheme IX farnesyltransferase (Bartonella bacilliformis (strain ATCC 35685 / KC583 / Herrer 020/F12,63)).